Here is a 930-residue protein sequence, read N- to C-terminus: Isoleucine--tRNA ligase (930 aa).

A 'HIGH' region motif is present at residues 57-67 (PYANGNIHVGH). Glutamate 554 contacts L-isoleucyl-5'-AMP. Residues 595 to 599 (KMSKS) carry the 'KMSKS' region motif. Lysine 598 is a binding site for ATP. The Zn(2+) site is built by cysteine 888, cysteine 891, cysteine 908, and cysteine 911.

The protein belongs to the class-I aminoacyl-tRNA synthetase family. IleS type 1 subfamily. In terms of assembly, monomer. The cofactor is Zn(2+).

Its subcellular location is the cytoplasm. It carries out the reaction tRNA(Ile) + L-isoleucine + ATP = L-isoleucyl-tRNA(Ile) + AMP + diphosphate. Catalyzes the attachment of isoleucine to tRNA(Ile). As IleRS can inadvertently accommodate and process structurally similar amino acids such as valine, to avoid such errors it has two additional distinct tRNA(Ile)-dependent editing activities. One activity is designated as 'pretransfer' editing and involves the hydrolysis of activated Val-AMP. The other activity is designated 'posttransfer' editing and involves deacylation of mischarged Val-tRNA(Ile). The chain is Isoleucine--tRNA ligase from Streptococcus pneumoniae serotype 19F (strain G54).